Here is a 376-residue protein sequence, read N- to C-terminus: MSDCSQNLLYDKFELPESVKMMAVEGSGGSVDKQASFIAEPLERGMGHTLGNALRRALLIGLEAPAIISFSMTGVLHEYMAINGIIEDVTNIILNLKGALLKKYPFQDSENGRCTQLLKSKVSIDASDLAACGGQKAVTLADLLQEGGFESVNPDYVIFTVTQPMQLDITLRVAFGRGYTTSERIVLEDKGVNEIVLDAAFSPVVLVNYFVEDTRVGQDTDFDRLILHVETDGRVSPKEALAFSTQILTKHFSIFEKMDEKKIVFEEAISLEKENKDDILHKLVLGINEIELSVRSTNCLSNANIETIGELVIMPEPRLLQFRNFGKKSLCEIKNKLKEMKLELGMDLSQFGVGLDNVKEKMKWYADKIRSKNGKG.

An alpha N-terminal domain (alpha-NTD) region spans residues 1-259 (MSDCSQNLLY…KHFSIFEKMD (259 aa)). Residues 276–376 (KDDILHKLVL…DKIRSKNGKG (101 aa)) form an alpha C-terminal domain (alpha-CTD) region.

This sequence belongs to the RNA polymerase alpha chain family. In terms of assembly, homodimer. The RNAP catalytic core consists of 2 alpha, 1 beta, 1 beta' and 1 omega subunit. When a sigma factor is associated with the core the holoenzyme is formed, which can initiate transcription.

The catalysed reaction is RNA(n) + a ribonucleoside 5'-triphosphate = RNA(n+1) + diphosphate. In terms of biological role, DNA-dependent RNA polymerase catalyzes the transcription of DNA into RNA using the four ribonucleoside triphosphates as substrates. In Chlamydia abortus (strain DSM 27085 / S26/3) (Chlamydophila abortus), this protein is DNA-directed RNA polymerase subunit alpha.